Here is a 292-residue protein sequence, read N- to C-terminus: 4-hydroxy-tetrahydrodipicolinate synthase (292 aa).

Thr-45 contributes to the pyruvate binding site. Residue Tyr-133 is the Proton donor/acceptor of the active site. Catalysis depends on Lys-161, which acts as the Schiff-base intermediate with substrate. Ile-203 is a pyruvate binding site.

This sequence belongs to the DapA family. In terms of assembly, homotetramer; dimer of dimers.

The protein localises to the cytoplasm. It catalyses the reaction L-aspartate 4-semialdehyde + pyruvate = (2S,4S)-4-hydroxy-2,3,4,5-tetrahydrodipicolinate + H2O + H(+). Its pathway is amino-acid biosynthesis; L-lysine biosynthesis via DAP pathway; (S)-tetrahydrodipicolinate from L-aspartate: step 3/4. Catalyzes the condensation of (S)-aspartate-beta-semialdehyde [(S)-ASA] and pyruvate to 4-hydroxy-tetrahydrodipicolinate (HTPA). This chain is 4-hydroxy-tetrahydrodipicolinate synthase, found in Sodalis glossinidius (strain morsitans).